The chain runs to 139 residues: Nucleoside diphosphate kinase (139 aa).

The ATP site is built by lysine 10, phenylalanine 58, arginine 86, threonine 92, arginine 103, and asparagine 113. Histidine 116 (pros-phosphohistidine intermediate) is an active-site residue.

Belongs to the NDK family. Homotetramer. The cofactor is Mg(2+).

Its subcellular location is the cytoplasm. The catalysed reaction is a 2'-deoxyribonucleoside 5'-diphosphate + ATP = a 2'-deoxyribonucleoside 5'-triphosphate + ADP. The enzyme catalyses a ribonucleoside 5'-diphosphate + ATP = a ribonucleoside 5'-triphosphate + ADP. Major role in the synthesis of nucleoside triphosphates other than ATP. The ATP gamma phosphate is transferred to the NDP beta phosphate via a ping-pong mechanism, using a phosphorylated active-site intermediate. This Phenylobacterium zucineum (strain HLK1) protein is Nucleoside diphosphate kinase.